A 294-amino-acid polypeptide reads, in one-letter code: Uracil-DNA glycosylase (294 aa).

D139 functions as the Proton acceptor in the catalytic mechanism.

Belongs to the uracil-DNA glycosylase (UDG) superfamily. UNG family.

The protein resides in the host nucleus. It carries out the reaction Hydrolyzes single-stranded DNA or mismatched double-stranded DNA and polynucleotides, releasing free uracil.. Excises uracil residues from the DNA which can arise as a result of misincorporation of dUMP residues by DNA polymerase or deamination of cytosines. Therefore may reduce deleterious uracil incorporation into the viral genome, particularly in terminally differentiated cells which lack DNA repair enzymes. The chain is Uracil-DNA glycosylase (UL2) from Human herpesvirus 2 (strain 333) (HHV-2).